A 962-amino-acid polypeptide reads, in one-letter code: Alpha-glucan phosphorylase 1 (962 aa).

The transit peptide at 1 to 63 (MDTMRISGVS…RSFLSVKSIS (63 aa)) directs the protein to the chloroplast. The disordered stretch occupies residues 525-552 (AKDAQNGVKTEQEEEKTAGEEEEDEVIP). Lysine 808 is subject to N6-(pyridoxal phosphate)lysine.

The protein belongs to the glycogen phosphorylase family. It depends on pyridoxal 5'-phosphate as a cofactor.

It localises to the plastid. The protein resides in the chloroplast stroma. The catalysed reaction is [(1-&gt;4)-alpha-D-glucosyl](n) + phosphate = [(1-&gt;4)-alpha-D-glucosyl](n-1) + alpha-D-glucose 1-phosphate. In terms of biological role, phosphorylase is an important allosteric enzyme in carbohydrate metabolism. Enzymes from different sources differ in their regulatory mechanisms and in their natural substrates. However, all known phosphorylases share catalytic and structural properties. May be not required for the degradation of starch, but the phosphorolysis of starch may play an important role in water stress tolerance. This Arabidopsis thaliana (Mouse-ear cress) protein is Alpha-glucan phosphorylase 1 (PHS1).